The primary structure comprises 66 residues: Large ribosomal subunit protein uL29 (66 aa).

The protein belongs to the universal ribosomal protein uL29 family.

The sequence is that of Large ribosomal subunit protein uL29 from Ruegeria sp. (strain TM1040) (Silicibacter sp.).